The primary structure comprises 197 residues: Recombination protein RecR (197 aa).

Residues 56-71 form a C4-type zinc finger; sequence CSVCGNFDTIDPCAIC. Residues 79–174 enclose the Toprim domain; it reads SMLCVVEDVA…TVSGLAHGVP (96 aa).

Belongs to the RecR family.

Functionally, may play a role in DNA repair. It seems to be involved in an RecBC-independent recombinational process of DNA repair. It may act with RecF and RecO. The sequence is that of Recombination protein RecR from Paramagnetospirillum magneticum (strain ATCC 700264 / AMB-1) (Magnetospirillum magneticum).